The primary structure comprises 739 residues: POU domain, class 2, transcription factor 1 (739 aa).

The span at 1-11 (MNNPSETSKPS) shows a compositional bias: polar residues. Disordered stretches follow at residues 1–39 (MNNP…GGPI), 67–95 (SLNV…SVQA), 253–277 (TPIQ…EEPS), 353–378 (DSTL…RRKK), and 489–553 (SVTG…SSPL). The segment covering 81–95 (SQQPSQPSQQPSVQA) has biased composition (low complexity). One can recognise a POU-specific domain in the interval 274 to 348 (EEPSDLEELE…LLEKWLNDAE (75 aa)). Low complexity predominate over residues 353–364 (DSTLSSPSALNS). The segment at residues 375–434 (RRKKRTSIETNIRVALEKSFLENQKPTSEEITMIADQLNMEKEVIRVWFCNRRQKEKRIN) is a DNA-binding region (homeobox). Low complexity predominate over residues 489-552 (SVTGTTETTS…QTTSTPLSSP (64 aa)).

This sequence belongs to the POU transcription factor family. Class-2 subfamily. In terms of assembly, interacts with NR3C1, AR and PGR.

The protein localises to the nucleus. Functionally, transcription factor that binds to the octamer motif (5'-ATTTGCAT-3') and activates the promoters of the genes for some small nuclear RNAs (snRNA) and of genes such as those for histone H2B and immunoglobulins. Modulates transcription transactivation by NR3C1, AR and PGR. This chain is POU domain, class 2, transcription factor 1 (POU2F1), found in Gallus gallus (Chicken).